A 347-amino-acid chain; its full sequence is Very-long-chain 3-oxoacyl-CoA reductase (347 aa).

Residues 20 to 40 form a helical membrane-spanning segment; the sequence is LLWVVFGLGVLKCTTLSLRFL. NADP(+) is bound by residues Asp120, Asn147, Tyr223, Lys227, Val256, and Ser258. The active-site Proton donor is Tyr223. The active-site Lowers pKa of active site Tyr is Lys227.

The protein belongs to the short-chain dehydrogenases/reductases (SDR) family. Interacts with the fatty acid elongation system components ELO3 and TSC13.

It is found in the endoplasmic reticulum membrane. It catalyses the reaction a very-long-chain (3R)-3-hydroxyacyl-CoA + NADP(+) = a very-long-chain 3-oxoacyl-CoA + NADPH + H(+). The enzyme catalyses 3-oxooctadecanoyl-CoA + NADPH + H(+) = (3R)-hydroxyoctadecanoyl-CoA + NADP(+). It carries out the reaction 3-oxoeicosanoyl-CoA + NADPH + H(+) = (3R)-hydroxyeicosanoyl-CoA + NADP(+). The catalysed reaction is 3-oxodocosanoyl-CoA + NADPH + H(+) = (3R)-hydroxydocosanoyl-CoA + NADP(+). It catalyses the reaction 3-oxotetracosanoyl-CoA + NADPH + H(+) = (3R)-hydroxytetracosanoyl-CoA + NADP(+). The enzyme catalyses 3-oxohexacosanoyl-CoA + NADPH + H(+) = (3R)-hydroxyhexacosanoyl-CoA + NADP(+). It functions in the pathway lipid metabolism; fatty acid biosynthesis. Functionally, component of the microsomal membrane bound fatty acid elongation system, which produces the 26-carbon very long-chain fatty acids (VLCFA) from palmitate. Catalyzes the reduction of the 3-ketoacyl-CoA intermediate that is formed in each cycle of fatty acid elongation. VLCFAs serve as precursors for ceramide and sphingolipids. The polypeptide is Very-long-chain 3-oxoacyl-CoA reductase (IFA38) (Saccharomyces cerevisiae (strain ATCC 204508 / S288c) (Baker's yeast)).